A 604-amino-acid chain; its full sequence is Glutamine--fructose-6-phosphate aminotransferase [isomerizing] (604 aa).

Cys2 (nucleophile; for GATase activity) is an active-site residue. The Glutamine amidotransferase type-2 domain maps to Cys2–Glu216. SIS domains follow at residues Leu281–Ala420 and Val453–Pro594. Lys599 acts as the For Fru-6P isomerization activity in catalysis.

Homodimer.

It localises to the cytoplasm. The enzyme catalyses D-fructose 6-phosphate + L-glutamine = D-glucosamine 6-phosphate + L-glutamate. Its function is as follows. Catalyzes the first step in hexosamine metabolism, converting fructose-6P into glucosamine-6P using glutamine as a nitrogen source. The chain is Glutamine--fructose-6-phosphate aminotransferase [isomerizing] from Thermus thermophilus (strain ATCC BAA-163 / DSM 7039 / HB27).